The primary structure comprises 23 residues: MVTMVKKWLLLMTFMAGCRGMIY.

In terms of biological role, may play a role inhost modulation. Is not involved in viral protein synthesis or DNA replication. This is Protein NS0 (NS0) from Porcine circovirus 2 (PCV2).